We begin with the raw amino-acid sequence, 183 residues long: Adenine phosphoribosyltransferase (183 aa).

The protein belongs to the purine/pyrimidine phosphoribosyltransferase family. As to quaternary structure, homodimer.

The protein localises to the cytoplasm. The enzyme catalyses AMP + diphosphate = 5-phospho-alpha-D-ribose 1-diphosphate + adenine. It functions in the pathway purine metabolism; AMP biosynthesis via salvage pathway; AMP from adenine: step 1/1. Its function is as follows. Catalyzes a salvage reaction resulting in the formation of AMP, that is energically less costly than de novo synthesis. The sequence is that of Adenine phosphoribosyltransferase from Salmonella gallinarum (strain 287/91 / NCTC 13346).